The chain runs to 160 residues: uncharacterized protein (160 aa).

This is an uncharacterized protein from Escherichia coli O157:H7.